Here is a 425-residue protein sequence, read N- to C-terminus: Phosphoribosylamine--glycine ligase (425 aa).

The region spanning 107–312 (KDLCARYNIP…LLVLLNAAVD (206 aa)) is the ATP-grasp domain. An ATP-binding site is contributed by 133-193 (VDQTGAPIVI…EEFMTGEEAS (61 aa)). Residues 214 to 233 (RVGDGDVGPNTGGMGAYSPA) form a disordered region. 2 residues coordinate Mg(2+): Glu282 and Asn284.

Belongs to the GARS family. The cofactor is Mg(2+). Requires Mn(2+) as cofactor.

It carries out the reaction 5-phospho-beta-D-ribosylamine + glycine + ATP = N(1)-(5-phospho-beta-D-ribosyl)glycinamide + ADP + phosphate + H(+). The protein operates within purine metabolism; IMP biosynthesis via de novo pathway; N(1)-(5-phospho-D-ribosyl)glycinamide from 5-phospho-alpha-D-ribose 1-diphosphate: step 2/2. This Mesorhizobium japonicum (strain LMG 29417 / CECT 9101 / MAFF 303099) (Mesorhizobium loti (strain MAFF 303099)) protein is Phosphoribosylamine--glycine ligase.